Reading from the N-terminus, the 1383-residue chain is DNA-directed RNA polymerase subunit beta'' (1383 aa).

Positions 220, 289, 296, and 299 each coordinate Zn(2+).

Belongs to the RNA polymerase beta' chain family. RpoC2 subfamily. In terms of assembly, in plastids the minimal PEP RNA polymerase catalytic core is composed of four subunits: alpha, beta, beta', and beta''. When a (nuclear-encoded) sigma factor is associated with the core the holoenzyme is formed, which can initiate transcription. Zn(2+) is required as a cofactor.

It localises to the plastid. The protein resides in the chloroplast. The catalysed reaction is RNA(n) + a ribonucleoside 5'-triphosphate = RNA(n+1) + diphosphate. Its function is as follows. DNA-dependent RNA polymerase catalyzes the transcription of DNA into RNA using the four ribonucleoside triphosphates as substrates. The chain is DNA-directed RNA polymerase subunit beta'' from Oenothera parviflora (Small-flowered evening primrose).